Consider the following 292-residue polypeptide: Nucleotide-binding protein Ldb0621 (292 aa).

14-21 (GMSGAGKT) serves as a coordination point for ATP. 64 to 67 (DLRV) serves as a coordination point for GTP.

It belongs to the RapZ-like family.

Its function is as follows. Displays ATPase and GTPase activities. This Lactobacillus delbrueckii subsp. bulgaricus (strain ATCC 11842 / DSM 20081 / BCRC 10696 / JCM 1002 / NBRC 13953 / NCIMB 11778 / NCTC 12712 / WDCM 00102 / Lb 14) protein is Nucleotide-binding protein Ldb0621.